The sequence spans 201 residues: Histidinol dehydrogenase (201 aa).

It belongs to the histidinol dehydrogenase family. In terms of assembly, homodimer. Zn(2+) serves as cofactor.

The enzyme catalyses L-histidinol + 2 NAD(+) + H2O = L-histidine + 2 NADH + 3 H(+). It functions in the pathway amino-acid biosynthesis; L-histidine biosynthesis; L-histidine from 5-phospho-alpha-D-ribose 1-diphosphate: step 9/9. Functionally, catalyzes the sequential NAD-dependent oxidations of L-histidinol to L-histidinaldehyde and then to L-histidine. The sequence is that of Histidinol dehydrogenase (hisD) from Buchnera aphidicola subsp. Schlechtendalia chinensis.